Here is a 423-residue protein sequence, read N- to C-terminus: Histidine--tRNA ligase (423 aa).

It belongs to the class-II aminoacyl-tRNA synthetase family.

The protein resides in the cytoplasm. It catalyses the reaction tRNA(His) + L-histidine + ATP = L-histidyl-tRNA(His) + AMP + diphosphate + H(+). This Picrophilus torridus (strain ATCC 700027 / DSM 9790 / JCM 10055 / NBRC 100828 / KAW 2/3) protein is Histidine--tRNA ligase.